The primary structure comprises 393 residues: Chalcone synthase G (393 aa).

The active site involves Cys164.

The protein belongs to the thiolase-like superfamily. Chalcone/stilbene synthases family. As to expression, expressed in seedlings after illumination with UV light. No expression detectable in flowers. It is not known for sure whether CHSG encodes a chalcone synthase or a very closely related condensing enzyme.

The enzyme catalyses (E)-4-coumaroyl-CoA + 3 malonyl-CoA + 3 H(+) = 2',4,4',6'-tetrahydroxychalcone + 3 CO2 + 4 CoA. The protein operates within secondary metabolite biosynthesis; flavonoid biosynthesis. In terms of biological role, the primary product of this enzyme is 4,2',4',6'-tetrahydroxychalcone (also termed naringenin-chalcone or chalcone) which can under specific conditions spontaneously isomerize into naringenin. In Petunia hybrida (Petunia), this protein is Chalcone synthase G (CHSG).